The sequence spans 401 residues: Protein nanos (401 aa).

Residues 181–207 (LGRMSYGSAPPQVQMPPQQQHQQQQGL) are disordered. Positions 190–205 (PPQVQMPPQQQHQQQQ) are enriched in low complexity. A Nanos-type zinc finger spans residues 318 to 372 (HCVFCENNNEPEAVINSHSVRDNFNRVLCPKLRTYVCPICGASGDSAHTIKYCPK). Zn(2+)-binding residues include C319, C322, H335, C346, C354, C357, H365, and C370. 2 consecutive short sequence motifs (C2HC) follow at residues 319-346 (CVFC…RVLC) and 354-370 (CPIC…IKYC).

It belongs to the nanos family. In terms of assembly, interacts with pum and brat. Interacts with cup. Interacts with mei-P26; possibly involved in regulation of brat levels. Interacts with wh; may be involved in mei-P26-dependent derepression of the BMP signaling pathway. Acts via the formation of a quaternary complex composed of pum, nanos, brat and the 3'-UTR mRNA of hb. Binds RNA with no specificity. Posterior part of the embryo. While the transcript is present throughout the embryo, nanos translation is controlled by smg, and the protein is found in pole plasm and pole cells. In the female ovary expressed in germline stem cells, precystoblasts and in maturing cystoblasts; in early cystoblasts expression is post-transcriptionally repressed by bam in a 3'UTR-dependent manner.

The protein localises to the cytoplasm. It is found in the cytoplasmic ribonucleoprotein granule. Functionally, maternal RNA-binding protein that is required for germ cells proliferation and self-renewal. Acts by forming a complex with pum and brat that regulates translation and mRNA stability. The complex binds to the Nanos Response Element (NRE), a 16 bp sequence in the hb mRNA 3'-UTR and prevents its translation. Controls posterior development. Rescuing factor for the abdominal defect of posterior group mutants. The other posterior group genes are not required for nanos function but rather play a role in localization or distribution of nanos protein. This Drosophila melanogaster (Fruit fly) protein is Protein nanos.